Reading from the N-terminus, the 602-residue chain is 4-hydroxy-3-methylbut-2-en-1-yl diphosphate synthase (flavodoxin) (602 aa).

The [4Fe-4S] cluster site is built by Cys508, Cys511, Cys543, and Glu550.

It belongs to the IspG family. The cofactor is [4Fe-4S] cluster.

The catalysed reaction is (2E)-4-hydroxy-3-methylbut-2-enyl diphosphate + oxidized [flavodoxin] + H2O + 2 H(+) = 2-C-methyl-D-erythritol 2,4-cyclic diphosphate + reduced [flavodoxin]. It participates in isoprenoid biosynthesis; isopentenyl diphosphate biosynthesis via DXP pathway; isopentenyl diphosphate from 1-deoxy-D-xylulose 5-phosphate: step 5/6. Functionally, converts 2C-methyl-D-erythritol 2,4-cyclodiphosphate (ME-2,4cPP) into 1-hydroxy-2-methyl-2-(E)-butenyl 4-diphosphate. This is 4-hydroxy-3-methylbut-2-en-1-yl diphosphate synthase (flavodoxin) from Chlamydia trachomatis serovar D (strain ATCC VR-885 / DSM 19411 / UW-3/Cx).